A 386-amino-acid chain; its full sequence is Flap endonuclease 1 (386 aa).

Residues methionine 1–arginine 104 are N-domain. A Mg(2+)-binding site is contributed by aspartate 34. 2 residues coordinate DNA: arginine 47 and arginine 70. Mg(2+)-binding residues include aspartate 86, glutamate 158, glutamate 160, aspartate 179, and aspartate 181. The segment at glutamate 122–tyrosine 253 is I-domain. Glutamate 158 is a binding site for DNA. Residues glycine 231 and aspartate 233 each contribute to the DNA site. Aspartate 233 is a Mg(2+) binding site. Residues threonine 336–phenylalanine 344 are interaction with PCNA. The interval valine 354–lysine 386 is disordered.

Belongs to the XPG/RAD2 endonuclease family. FEN1 subfamily. Interacts with PCNA. Three molecules of FEN1 bind to one PCNA trimer with each molecule binding to one PCNA monomer. PCNA stimulates the nuclease activity without altering cleavage specificity. Mg(2+) serves as cofactor. In terms of processing, phosphorylated. Phosphorylation upon DNA damage induces relocalization to the nuclear plasma.

The protein resides in the nucleus. The protein localises to the nucleolus. It localises to the nucleoplasm. It is found in the mitochondrion. Its function is as follows. Structure-specific nuclease with 5'-flap endonuclease and 5'-3' exonuclease activities involved in DNA replication and repair. During DNA replication, cleaves the 5'-overhanging flap structure that is generated by displacement synthesis when DNA polymerase encounters the 5'-end of a downstream Okazaki fragment. It enters the flap from the 5'-end and then tracks to cleave the flap base, leaving a nick for ligation. Also involved in the long patch base excision repair (LP-BER) pathway, by cleaving within the apurinic/apyrimidinic (AP) site-terminated flap. Acts as a genome stabilization factor that prevents flaps from equilibrating into structures that lead to duplications and deletions. Also possesses 5'-3' exonuclease activity on nicked or gapped double-stranded DNA, and exhibits RNase H activity. Also involved in replication and repair of rDNA and in repairing mitochondrial DNA. This Drosophila pseudoobscura pseudoobscura (Fruit fly) protein is Flap endonuclease 1.